We begin with the raw amino-acid sequence, 707 residues long: Choline transporter-like protein 4 (707 aa).

Topologically, residues 1 to 33 (MGGKQDQDKEAYGKPAKYDPSFRGPIRNRSCTD) are cytoplasmic. The helical transmembrane segment at 34-54 (IICCVLFFLFILGYIAVGILA) threads the bilayer. At 55–227 (WVYGDPKQVL…KIFEDFAQSW (173 aa)) the chain is on the extracellular side. N-linked (GlcNAc...) asparagine glycans are attached at residues N68, N185, and N196. The chain crosses the membrane as a helical span at residues 228-248 (YWILIALGLALVLSLLFILLL). Residues 249 to 250 (RL) are Cytoplasmic-facing. Residues 251–271 (VAGPLVFVLIIGVLGVLAYGI) traverse the membrane as a helical segment. Residues 272 to 307 (YHCWEEYRVLRDKGASISQLGFTTNLSAYRNVQETW) lie on the Extracellular side of the membrane. An N-linked (GlcNAc...) asparagine glycan is attached at N296. Residues 308 to 328 (LAALIILAVLEGVLLLMLIFL) traverse the membrane as a helical segment. The Cytoplasmic portion of the chain corresponds to 329–356 (RQRICIAIALLKEASRAVGYIMSTMFYP). The chain crosses the membrane as a helical span at residues 357–377 (LVTFALLLVCIAYWAIIALFL). Residues 378–452 (ATSGQPQYVF…AVLGLFWTIN (75 aa)) are Extracellular-facing. N-linked (GlcNAc...) asparagine glycosylation is found at N391, N403, and N413. Residues 453 to 473 (WVLALGQCVLAGAFASFYWAF) form a helical membrane-spanning segment. Residues 474 to 498 (HKPRDIPTFPLGSAFLRTLRYHTGS) lie on the Cytoplasmic side of the membrane. Residues 499 to 519 (LAFGALILTLVQIARVILEYI) traverse the membrane as a helical segment. The Extracellular portion of the chain corresponds to 520-557 (DHKLRGAQNPLTRCILCCFKCCLWCLEKFIKFLNRNAY). A helical membrane pass occupies residues 558-578 (IMIAIYGKNFCVSAKNAFMLL). Over 579 to 594 (MRNIVRVVVLDKVTDL) the chain is Cytoplasmic. Residues 595-615 (LLFFGKLLVVGGVGVLSFFFF) form a helical membrane-spanning segment. The Extracellular portion of the chain corresponds to 616–635 (TGRIPSLGKTFENPQLNYYW). The helical transmembrane segment at 636–656 (LPIMVSILGAYLIASGFFSVF) threads the bilayer. The Cytoplasmic segment spans residues 657 to 707 (GMCVDTLFLCFLEDLERNDGSADRPYYMSKSLLKILGKKNKGTPGDKKRKK).

Belongs to the CTL (choline transporter-like) family. N-glycosylated; N-glycosylation of Asn-68 and Asn-391 is required for a proper thiamine pyrophosphate uptake.

The protein resides in the membrane. The protein localises to the apical cell membrane. It catalyses the reaction choline(out) + n H(+)(in) = choline(in) + n H(+)(out). It carries out the reaction thiamine diphosphate(out) = thiamine diphosphate(in). Functionally, choline transporter that plays a role in the choline-acetylcholine system and is required to the efferent innervation of hair cells in the olivocochlear bundle for the maintenance of physiological function of outer hair cells and the protection of hair cells from acoustic injury. Also described as a thiamine pyrophosphate transporter in colon, may mediate the absorption of microbiota-generated thiamine pyrophosphate and contribute to host thiamine (vitamin B1) homeostasis. The sequence is that of Choline transporter-like protein 4 from Bos taurus (Bovine).